The chain runs to 212 residues: Probable U3 small nucleolar RNA-associated protein 11 (212 aa).

It belongs to the UTP11 family. Component of the ribosomal small subunit (SSU) processome.

It localises to the nucleus. The protein resides in the nucleolus. In terms of biological role, involved in nucleolar processing of pre-18S ribosomal RNA. This chain is Probable U3 small nucleolar RNA-associated protein 11, found in Plasmodium falciparum (isolate 3D7).